Here is a 391-residue protein sequence, read N- to C-terminus: Phosphoglycerate kinase (391 aa).

Substrate is bound by residues 21 to 23 (DLN), Arg-36, 59 to 62 (HLGR), Arg-113, and Arg-146. Residues Lys-197, Glu-319, and 345-348 (GGDT) contribute to the ATP site.

This sequence belongs to the phosphoglycerate kinase family. In terms of assembly, monomer.

The protein resides in the cytoplasm. It catalyses the reaction (2R)-3-phosphoglycerate + ATP = (2R)-3-phospho-glyceroyl phosphate + ADP. It functions in the pathway carbohydrate degradation; glycolysis; pyruvate from D-glyceraldehyde 3-phosphate: step 2/5. This chain is Phosphoglycerate kinase, found in Shewanella baltica (strain OS155 / ATCC BAA-1091).